A 1302-amino-acid chain; its full sequence is Multidrug resistance protein 1 (1302 aa).

The helical transmembrane segment at 43-63 (GVFEIILLIIGIIGSIGVGCL) threads the bilayer. Positions 51 to 360 (IIGIIGSIGV…ISTPINILNS (310 aa)) constitute an ABC transmembrane type-1 1 domain. Asparagine 83 carries an N-linked (GlcNAc...) asparagine glycan. The next 5 membrane-spanning stretches (helical) occupy residues 118 to 138 (LYFAIGNMVAGFLQTICFFVL), 192 to 212 (LFQTFSSFITGYLIGFIKCWD), 213 to 233 (LTLVVLCMFPFIMVSMMGLGM), 292 to 312 (IGIGTGLGCMMFFIMSSNALG), and 331 to 351 (AGTVLTVFMSVLLATQSLSQI). The region spanning 395–634 (IRFEDVQFVY…KGTYYGLVKR (240 aa)) is the ABC transporter 1 domain. 430–437 (GASGCGKS) contacts ATP. The N-linked (GlcNAc...) asparagine glycan is linked to asparagine 663. The chain crosses the membrane as a helical span at residues 712-732 (YIFCTLGLIGGIGAGAAFPFY). The ABC transmembrane type-1 2 domain maps to 713–1022 (IFCTLGLIGG…IGNVLPDVGK (310 aa)). The N-linked (GlcNAc...) asparagine glycan is linked to asparagine 751. A helical transmembrane segment spans residues 765 to 785 (MIIICIGIITMISFFCYVGLF). Asparagine 808 carries N-linked (GlcNAc...) asparagine glycosylation. Transmembrane regions (helical) follow at residues 841–861 (VGDIIEIMSTVGFGFGIGLYF) and 862–882 (SWKLSLCILAVFPIISFFMFI). An ABC transporter 2 domain is found at 1057–1296 (IEFKNIHFRY…KGFYYTLAMQ (240 aa)). Residue 1092-1099 (GASGCGKS) participates in ATP binding.

Belongs to the ABC transporter superfamily. ABCB family. Multidrug resistance exporter (TC 3.A.1.201) subfamily.

It localises to the membrane. The catalysed reaction is ATP + H2O + xenobioticSide 1 = ADP + phosphate + xenobioticSide 2.. Functionally, energy-dependent efflux pump responsible for decreased drug accumulation in multidrug resistance parasites. The polypeptide is Multidrug resistance protein 1 (Entamoeba histolytica (strain ATCC 30459 / HM-1:IMSS / ABRM)).